We begin with the raw amino-acid sequence, 473 residues long: Maltose fermentation regulatory protein MAL13 (473 aa).

The zn(2)-C6 fungal-type DNA-binding region spans 13–39; that stretch reads CDCCRIRRVKCDGKRPCSSCLQNSLDC. The Nuclear localization signal signature appears at 46–54; that stretch reads RKRGPKSIR.

Belongs to the MAL13 family.

It localises to the nucleus. Its function is as follows. Regulates the coordinate transcription of structural MAL1S (maltase) and AGT1 (maltose permease) genes. This Saccharomyces cerevisiae (strain ATCC 204508 / S288c) (Baker's yeast) protein is Maltose fermentation regulatory protein MAL13 (MAL13).